Here is a 302-residue protein sequence, read N- to C-terminus: Proline dehydrogenase 1 (302 aa).

A substrate-binding site is contributed by Lys95. Residue Asp129 is part of the active site. Residues Met130 and Gln158 each coordinate FAD. Arg179 is an active-site residue. Residues 182-184 (KGA) and 221-222 (TH) each bind FAD. 283-284 (RR) serves as a coordination point for substrate.

Belongs to the proline dehydrogenase family. FAD is required as a cofactor.

It carries out the reaction L-proline + a quinone = (S)-1-pyrroline-5-carboxylate + a quinol + H(+). Its pathway is amino-acid degradation; L-proline degradation into L-glutamate; L-glutamate from L-proline: step 1/2. Functionally, converts proline to delta-1-pyrroline-5-carboxylate. This is Proline dehydrogenase 1 (fadM) from Bacillus subtilis (strain 168).